Here is a 503-residue protein sequence, read N- to C-terminus: Zinc finger protein JACKDAW (503 aa).

The span at 32 to 51 (IPDLNPNSNPNPNAKPNSSS) shows a compositional bias: low complexity. A disordered region spans residues 32–68 (IPDLNPNSNPNPNAKPNSSSAKKKRNQPGTPDPDADV). Position 72 is a phosphoserine (Ser72). C2H2-type zinc fingers lie at residues 82-104 (FVCE…RRGH) and 124-154 (YICP…SRKH). Short sequence motifs (nuclear localization signal) lie at residues 100–107 (HRRGHNLP) and 146–153 (IKKHYSRK). The C2H2-type 2; degenerate zinc finger occupies 159-182 (WKCEKCSKKYAVQSDWKAHAKTCG). Positions 161, 164, 177, 181, 188, 190, 203, and 207 each coordinate Zn(2+). Residues 186-209 (YKCDCGTLFSRKDSFITHRAFCDA) form a CCHC-type 2; atypical zinc finger. An SHR-binding region spans residues 196–208 (RKDSFITHRAFCD). Disordered stretches follow at residues 301–417 (SSSS…SSPM) and 432–465 (RENH…LNPA). Residues 319–358 (TSTNPSLTLSSSSTSQQTSASLQHQTLKDSSFSPLFSSSS) show a composition bias toward low complexity. A compositionally biased stretch (polar residues) spans 381–392 (MGSTRSNSSTAP). Positions 396-407 (AGPTMTSSSATA) are enriched in low complexity. Over residues 444–465 (GVSTSSVDNNPFQSNRSGLNPA) the composition is skewed to polar residues.

As to quaternary structure, interacts with SHR, SCR, MGP and itself. The heterodimer with SHR involves its zinc fingers. Interacts with SIEL. Binds to RGA and SCL3 competitively in the nucleus. As to expression, expressed in the quiescent center, the ground tissue stem cells and to a lesser extent in mature cortex and endodermis cells.

The protein localises to the nucleus. Transcription factor that, together with BIB, regulates tissue boundaries and asymmetric cell division by a rapid up-regulation of 'SCARECROW' (SCR), thus controlling the nuclear localization of 'SHORT-ROOT' (SHR) and restricting its action. Binds DNA via its zinc fingers. Recognizes and binds to SCL3 promoter sequence 5'-AGACAA-3' to promote its expression when in complex with RGA. Confines CYCD6 expression to the cortex-endodermis initial/daughter (CEI/CEID) tissues. Required for radial patterning and stem cell maintenance. Counteracted by 'MAGPIE' (MGP). Binds to the SCR and MGP promoter sequences. Controls position-dependent signals that regulate epidermal-cell-type patterning. The protein is Zinc finger protein JACKDAW of Arabidopsis thaliana (Mouse-ear cress).